We begin with the raw amino-acid sequence, 649 residues long: Mitochondrial Rho GTPase 1 (649 aa).

Residues 1–623 (MTKETIRVVI…KPTNIDYSSA (623 aa)) lie on the Cytoplasmic side of the membrane. In terms of domain architecture, Miro 1 spans 3 to 176 (KETIRVVICG…FYLCQRSISY (174 aa)). Residues 12–19 (GDDGVGKT), 61–63 (DTD), and 115–118 (NKCD) each bind GTP. EF-hand domains lie at 192–227 (SAVA…CFGK) and 320–355 (KGYR…TPGL). Ca(2+) contacts are provided by Asp-205, Asp-207, Asp-209, Glu-216, Asp-333, Asp-335, Asp-337, and Glu-344. Positions 436–601 (RKVFNCFVVG…FKKIIQASLE (166 aa)) constitute a Miro 2 domain. Residues 445–452 (GKRNSGKS), 481–485 (EVTGD), and 550–553 (LKAD) contribute to the GTP site. The chain crosses the membrane as a helical; Anchor for type IV membrane protein span at residues 624 to 644 (VILGSSIGFLALFSYTMIKLL). The Mitochondrial intermembrane portion of the chain corresponds to 645 to 649 (KPTQQ).

It belongs to the mitochondrial Rho GTPase family.

Its subcellular location is the mitochondrion outer membrane. In terms of biological role, mitochondrial GTPase involved in mitochondrial trafficking. Probably involved in control of anterograde transport of mitochondria and their subcellular distribution. This Candida glabrata (strain ATCC 2001 / BCRC 20586 / JCM 3761 / NBRC 0622 / NRRL Y-65 / CBS 138) (Yeast) protein is Mitochondrial Rho GTPase 1 (GEM1).